The primary structure comprises 1014 residues: Nebulette (1014 aa).

The tract at residues M1 to E24 is disordered. The segment covering I9–E24 has biased composition (acidic residues). 23 Nebulin repeats span residues F29–D63, K64–N99, S100–F136, S137–T172, Y173–N205, K206–D241, K242–D278, P279–G313, M314–G348, K349–G385, R386–G422, K423–G459, K460–G496, K497–G533, K534–S569, N570–V599, G600–A635, I636–P666, V667–Q693, R694–T728, L729–G759, R760–G794, and R795–E830. An Omega-N-methylarginine modification is found at D96. An Omega-N-methylarginine modification is found at R795. Residues G836 to S953 are linker. An SH3 domain is found at P954 to N1014.

Interacts (via nebulin repeats 1-5) with DESM (via rod region). Interacts (via SH3 domain) with XIRP2. In terms of assembly, interacts with ZYX/Zyxin. As to expression, abundantly expressed in cardiac muscle, but not in skeletal or smooth muscle. Localized to Z-lines in cardiac cells and to dense bodies in nonmuscle cells. Isoform 2 is expressed in non-muscle cells such as in fibroblasts.

It is found in the cytoplasm. Its function is as follows. Binds to actin and plays an important role in the assembly of the Z-disk. May functionally link sarcomeric actin to the desmin intermediate filaments in the heart muscle sarcomeres. Functionally, may play a role in the assembly of focal adhesions. The chain is Nebulette from Homo sapiens (Human).